The chain runs to 692 residues: Elongation factor G (692 aa).

The region spanning 8-283 (NRIRNIGIAA…AVIDYLPAPT (276 aa)) is the tr-type G domain. GTP contacts are provided by residues 17–24 (AHIDAGKT), 81–85 (DTPGH), and 135–138 (NKMD).

The protein belongs to the TRAFAC class translation factor GTPase superfamily. Classic translation factor GTPase family. EF-G/EF-2 subfamily.

Its subcellular location is the cytoplasm. Its function is as follows. Catalyzes the GTP-dependent ribosomal translocation step during translation elongation. During this step, the ribosome changes from the pre-translocational (PRE) to the post-translocational (POST) state as the newly formed A-site-bound peptidyl-tRNA and P-site-bound deacylated tRNA move to the P and E sites, respectively. Catalyzes the coordinated movement of the two tRNA molecules, the mRNA and conformational changes in the ribosome. In Helicobacter pylori (strain HPAG1), this protein is Elongation factor G.